We begin with the raw amino-acid sequence, 148 residues long: Putative antiporter subunit mnhG2 (148 aa).

3 helical membrane passes run 11-31, 51-71, and 72-92; these read IAAI…IGLI, VLLT…YLSV, and RLIL…HLIS. The interval 125 to 148 is disordered; that stretch reads EQLKQRAHEREERRRKTYEKEHDY. Residues 127–148 show a composition bias toward basic and acidic residues; it reads LKQRAHEREERRRKTYEKEHDY.

This sequence belongs to the CPA3 antiporters (TC 2.A.63) subunit G family. In terms of assembly, may form a heterooligomeric complex that consists of seven subunits: mnhA2, mnhB2, mnhC2, mnhD2, mnhE2, mnhF2 and mnhG2.

It is found in the cell membrane. This chain is Putative antiporter subunit mnhG2 (mnhG2), found in Staphylococcus saprophyticus subsp. saprophyticus (strain ATCC 15305 / DSM 20229 / NCIMB 8711 / NCTC 7292 / S-41).